The primary structure comprises 311 residues: Bifunctional protein FolD (311 aa).

NADP(+) is bound at residue 174–176 (GKG).

It belongs to the tetrahydrofolate dehydrogenase/cyclohydrolase family. In terms of assembly, homodimer.

It catalyses the reaction (6R)-5,10-methylene-5,6,7,8-tetrahydrofolate + NADP(+) = (6R)-5,10-methenyltetrahydrofolate + NADPH. The enzyme catalyses (6R)-5,10-methenyltetrahydrofolate + H2O = (6R)-10-formyltetrahydrofolate + H(+). It participates in one-carbon metabolism; tetrahydrofolate interconversion. In terms of biological role, catalyzes the oxidation of 5,10-methylenetetrahydrofolate to 5,10-methenyltetrahydrofolate and then the hydrolysis of 5,10-methenyltetrahydrofolate to 10-formyltetrahydrofolate. The protein is Bifunctional protein FolD of Pyrobaculum islandicum (strain DSM 4184 / JCM 9189 / GEO3).